A 449-amino-acid polypeptide reads, in one-letter code: Glucose-6-phosphate isomerase (449 aa).

E291 (proton donor) is an active-site residue. Residues H312 and K426 contribute to the active site.

It belongs to the GPI family.

It is found in the cytoplasm. The catalysed reaction is alpha-D-glucose 6-phosphate = beta-D-fructose 6-phosphate. The protein operates within carbohydrate biosynthesis; gluconeogenesis. It participates in carbohydrate degradation; glycolysis; D-glyceraldehyde 3-phosphate and glycerone phosphate from D-glucose: step 2/4. In terms of biological role, catalyzes the reversible isomerization of glucose-6-phosphate to fructose-6-phosphate. This is Glucose-6-phosphate isomerase from Streptococcus equi subsp. zooepidemicus (strain MGCS10565).